A 412-amino-acid polypeptide reads, in one-letter code: Phosphoglycerate kinase (412 aa).

Residues 26 to 28 (DFN), Arg-42, 65 to 68 (HLGR), Arg-133, and Arg-166 each bind substrate. ATP-binding positions include Lys-217, Gly-308, Glu-339, and 368–371 (GGDS).

It belongs to the phosphoglycerate kinase family. As to quaternary structure, monomer.

The protein localises to the cytoplasm. The enzyme catalyses (2R)-3-phosphoglycerate + ATP = (2R)-3-phospho-glyceroyl phosphate + ADP. Its pathway is carbohydrate degradation; glycolysis; pyruvate from D-glyceraldehyde 3-phosphate: step 2/5. This is Phosphoglycerate kinase from Synechococcus sp. (strain JA-3-3Ab) (Cyanobacteria bacterium Yellowstone A-Prime).